A 278-amino-acid polypeptide reads, in one-letter code: Undecaprenyl-diphosphatase 1 (278 aa).

Helical transmembrane passes span 45-65, 95-115, 119-139, 191-211, 225-245, and 256-276; these read AVIG…LVYF, WWVI…KPLI, LASL…MWWA, VAAT…AGLY, PLAV…AWLL, and FVVY…TGVL.

This sequence belongs to the UppP family.

It localises to the cell membrane. It carries out the reaction di-trans,octa-cis-undecaprenyl diphosphate + H2O = di-trans,octa-cis-undecaprenyl phosphate + phosphate + H(+). Catalyzes the dephosphorylation of undecaprenyl diphosphate (UPP). Confers resistance to bacitracin. This chain is Undecaprenyl-diphosphatase 1, found in Streptomyces coelicolor (strain ATCC BAA-471 / A3(2) / M145).